The following is a 79-amino-acid chain: Putative membrane protein insertion efficiency factor (79 aa).

This sequence belongs to the UPF0161 family.

The protein localises to the cell inner membrane. Functionally, could be involved in insertion of integral membrane proteins into the membrane. The protein is Putative membrane protein insertion efficiency factor of Prochlorococcus marinus (strain NATL2A).